Consider the following 125-residue polypeptide: Type II secretion system protein I (125 aa).

Positions 1–5 (MKQQG) are cleaved as a propeptide — leader sequence. At methionine 6 the chain carries N-methylmethionine. The helical transmembrane segment at 6 to 26 (MTLLEVMVALVIFALAGLTVL) threads the bilayer.

Belongs to the GSP I family. In terms of assembly, type II secretion is composed of four main components: the outer membrane complex, the inner membrane complex, the cytoplasmic secretion ATPase and the periplasm-spanning pseudopilus. Interacts with core component OutG. Post-translationally, cleaved by prepilin peptidase. Methylated by prepilin peptidase at the amino group of the N-terminal methionine once the leader sequence is cleaved by prepilin peptidase.

It is found in the cell inner membrane. Its function is as follows. Component of the type II secretion system required for the energy-dependent secretion of extracellular factors such as proteases and toxins from the periplasm. Part of the pseudopilus tip complex that is critical for the recognition and binding of secretion substrates. The polypeptide is Type II secretion system protein I (outI) (Dickeya chrysanthemi (Pectobacterium chrysanthemi)).